An 858-amino-acid polypeptide reads, in one-letter code: Heat shock protein 105 kDa (858 aa).

Serine 2 carries the post-translational modification N-acetylserine. At lysine 471 the chain carries N6-acetyllysine. Disordered regions lie at residues 500–585 (KVPT…PPEA) and 801–858 (VNQP…MDLD). The span at 504–515 (EEDDGSSVEADM) shows a compositional bias: acidic residues. A phosphoserine mark is found at serine 509 and serine 510. A compositionally biased stretch (polar residues) spans 533–549 (QQDNSEAGTQPQVQTDG). A Phosphoserine modification is found at serine 558. Composition is skewed to basic and acidic residues over residues 564–585 (EENK…PPEA) and 806–815 (PKIESPKLER). Serine 810 carries the post-translational modification Phosphoserine. Threonine 816 bears the Phosphothreonine mark. Residues 822-834 (LDKKEDLEGKDNF) show a composition bias toward basic and acidic residues.

The protein belongs to the heat shock protein 70 family. In terms of assembly, interacts with HSPA8/HSC70. Interacts with HSPA1A (via NBD) and HSPA1B (via NBD). In terms of processing, phosphorylation on Ser-509 may be important for regulation of the HSPA8/HSC70 chaperone activity. In terms of tissue distribution, predominantly expressed in the brain and also found in the liver.

The protein resides in the cytoplasm. Acts as a nucleotide-exchange factor (NEF) for chaperone proteins HSPA1A and HSPA1B, promoting the release of ADP from HSPA1A/B thereby triggering substrate release. Prevents the aggregation of denatured proteins in cells under severe stress, on which the ATP levels decrease markedly. Inhibits HSPA8/HSC70 ATPase and chaperone activities. The protein is Heat shock protein 105 kDa (HSPH1) of Cricetulus griseus (Chinese hamster).